The chain runs to 527 residues: Flagellar radial spoke protein 5 (527 aa).

Residues 1 to 22 (MSEPGEEPVAAPAGPAPDPVLN) form a disordered region. Residues 101 to 153 (RKWNELTIQAKQLEQEVAGLKGPDAEAKQAELENVKVQIADAEAAVAEVKQSF) are a coiled coil. Asymmetric dimethylarginine is present on residues arginine 191 and arginine 366.

The protein belongs to the aldo/keto reductase family. Post-translationally, asymmetrically dimethylated at Arg-191 and Arg-366 during flagellum resorption. Probably methylated by PRMT1.

Its subcellular location is the cytoplasm. The protein resides in the cytoskeleton. The protein localises to the flagellum axoneme. In terms of biological role, flagellar radial spokes contribute to the regulation of dynein arm activity and thus the pattern of flagellar bending. They consist of a thin stalk, which is attached to the a subfiber of the outer doublet microtubule, and a bulbous head, which is attached to the stalk and appears to interact with the projections from the central pair of microtubules. This Chlamydomonas reinhardtii (Chlamydomonas smithii) protein is Flagellar radial spoke protein 5.